The chain runs to 359 residues: Mannonate dehydratase (359 aa).

The protein belongs to the mannonate dehydratase family. Fe(2+) is required as a cofactor. Requires Mn(2+) as cofactor.

The enzyme catalyses D-mannonate = 2-dehydro-3-deoxy-D-gluconate + H2O. It participates in carbohydrate metabolism; pentose and glucuronate interconversion. Its function is as follows. Catalyzes the dehydration of D-mannonate. The chain is Mannonate dehydratase (uxuA) from Bacillus subtilis (strain 168).